A 3953-amino-acid polypeptide reads, in one-letter code: Zinc finger protein 469 (3953 aa).

14 disordered regions span residues 1–274 (MPGE…VSFQ), 313–465 (WPEE…MFFN), 512–672 (EWQG…FPFP), 763–784 (GHQR…RVPA), 869–1383 (ADEE…HSEL), 1400–1461 (PKPS…DLPV), 1575–1610 (LQRS…SQRR), 1703–1864 (SKTG…GASS), 1884–1947 (VSNT…TVEG), 1991–2030 (KTQG…TGPT), 2070–2700 (LTAA…TLGP), 2716–2915 (AGET…LSDS), 3001–3036 (EMPA…PGNT), and 3072–3110 (GPSF…PAKG). The span at 187-198 (PPSSFTSTNYTS) shows a compositional bias: polar residues. Composition is skewed to pro residues over residues 202 to 211 (TPRPPAPGPP) and 324 to 335 (YPLPTQPAPSPL). The segment covering 603–623 (STCSSLSPMSSSPANPSSEES) has biased composition (low complexity). 2 stretches are compositionally biased toward pro residues: residues 768–780 (PGPP…PAAP) and 896–911 (KAPP…PQTP). Residues 944–953 (QQRRGKQLKL) are compositionally biased toward basic residues. Gly residues predominate over residues 963–975 (AAEGSGSGGGGRA). A compositionally biased stretch (basic and acidic residues) spans 981-991 (RRNDGLGERPP). Residues 1005-1017 (RADPAPRVPRAAA) are compositionally biased toward low complexity. Composition is skewed to basic residues over residues 1025–1042 (SRRR…RKAR) and 1058–1070 (KNRR…RRAG). Basic and acidic residues predominate over residues 1082 to 1093 (PGAEDRRLREYD). Positions 1094 to 1103 (FASESEEDEQ) are enriched in acidic residues. A compositionally biased stretch (basic and acidic residues) spans 1120–1137 (KRKEVELTQGPREDEPQK). Over residues 1158-1177 (PGGSRPGPGRSPQARGPSRS) the composition is skewed to low complexity. Positions 1213–1229 (EETRPSLDFPQEAKEPE) are enriched in basic and acidic residues. Polar residues-rich tracts occupy residues 1278-1290 (PKPS…TAPH) and 1333-1350 (NPSS…SKIS). Residues 1577-1595 (RSKDTRGAPRELAEAESVG) show a composition bias toward basic and acidic residues. Polar residues-rich tracts occupy residues 1991–2005 (KTQG…QPEN) and 2014–2024 (NHASVNASPKT). Residues 2243–2262 (DTPKDSTLRIPEDSRKEKLW) show a composition bias toward basic and acidic residues. Residues 2409–2435 (TAPSSTASDFQSDSPQSHRNASHQTPQ) are compositionally biased toward polar residues. The C2H2-type 1 zinc-finger motif lies at 2472-2498 (VTCEVCAASFRSGPGLSRHKARKHRPH). Residues 2488–2498 (SRHKARKHRPH) are compositionally biased toward basic residues. Residues 2506 to 2521 (SPAALPAQQPLEPLAQ) are compositionally biased toward low complexity. The span at 2534-2546 (SGKERPNHSRGDP) shows a compositional bias: basic and acidic residues. Over residues 2565 to 2574 (PGSPHSQQLH) the composition is skewed to low complexity. The span at 2592-2631 (PRPDQAREDELHPKQAEKREGRRWRREPTVDSPSHSEGKS) shows a compositional bias: basic and acidic residues. Basic residues predominate over residues 2632 to 2642 (NKKRGKLRGRR). The span at 2664–2676 (PSPAMASYAASPS) shows a compositional bias: low complexity. Over residues 2777–2787 (DSSRAHSRSEE) the composition is skewed to basic and acidic residues. Low complexity predominate over residues 2805–2816 (TSSSPADSTTSS). Basic residues predominate over residues 2869–2879 (LTRKRNPHVYG). Residues 3095 to 3105 (AAGAGRAQGRG) show a composition bias toward low complexity. A C2H2-type 2 zinc finger spans residues 3115–3137 (YKCKVCFQRFRSLGELDLHKLAH). A disordered region spans residues 3232–3322 (TEPAPKHHRG…PDPWAGGEPL (91 aa)). Over residues 3260–3272 (GEAKKDSPGERAK) the composition is skewed to basic and acidic residues. Pro residues predominate over residues 3302–3314 (PGPPRTTPSPSPD). C2H2-type zinc fingers lie at residues 3337 to 3359 (RDCH…LAVH) and 3365 to 3388 (YLCP…GGAH). The C2H2-type 5; degenerate zinc finger occupies 3418 to 3442 (FACSSCNYTFAKKEQFDRHMNKHLR). 3 disordered regions span residues 3448-3501 (FAFR…PILS), 3518-3559 (STTK…SPFP), and 3576-3925 (ERPE…HRTA). Residues 3584–3602 (PGSPGPLLQQALPLGASLP) show a composition bias toward low complexity. A compositionally biased stretch (basic and acidic residues) spans 3633-3651 (CAPDHFQEDHLLQKEKEVS). 2 stretches are compositionally biased toward low complexity: residues 3728–3741 (PGPS…PRPG) and 3749–3759 (QPQPASGQLQS). Basic and acidic residues-rich tracts occupy residues 3876-3892 (EQRK…DRLG) and 3915-3925 (EPAEPHTHRTA).

The protein belongs to the krueppel C2H2-type zinc-finger protein family. As to expression, detected in cornea, sclera, skin fibroblasts and striated muscle.

It is found in the nucleus. May be involved in transcriptional regulation. In Homo sapiens (Human), this protein is Zinc finger protein 469 (ZNF469).